A 265-amino-acid polypeptide reads, in one-letter code: MANLTYSERAQKTKSPLVKKLFTIIEEKKTNLCASVDVRSTSQFLDLIEKLGPYICVVKTHIDILDDFSYEKTIVPLLELKKKFNFLIFEDRKFADIGNTVKLQYSAGIYKISSWADISNAHGVPGQGIVAGLKQAAQETTQEPRGLLMLAELSSKGSIATGEYTEKTIDIARSDKEFVVGFIAQRKIEAKDDDEDWVVMTPGVGLDDKGDALGQQYRTVSEVVTGAGSDIIIVGRGLIGAGRDPVAEGLRYRKAGWDAYLARLS.

Substrate-binding positions include Asp37, 59-61, 91-100, Tyr217, and Arg236; these read KTH and DRKFADIGNT. Catalysis depends on Lys93, which acts as the Proton donor.

The protein belongs to the OMP decarboxylase family.

It carries out the reaction orotidine 5'-phosphate + H(+) = UMP + CO2. The protein operates within pyrimidine metabolism; UMP biosynthesis via de novo pathway; UMP from orotate: step 2/2. The chain is Orotidine 5'-phosphate decarboxylase (URA3) from Saccharomycopsis fibuligera (Yeast).